The sequence spans 186 residues: Protein MTH_152 (186 aa).

Belongs to the flavoredoxin family. In terms of assembly, homodimer. FMN is required as a cofactor.

This Methanothermobacter thermautotrophicus (strain ATCC 29096 / DSM 1053 / JCM 10044 / NBRC 100330 / Delta H) (Methanobacterium thermoautotrophicum) protein is Protein MTH_152.